We begin with the raw amino-acid sequence, 593 residues long: Sodium-independent sulfate anion transporter (593 aa).

At 1 to 34 (MAPDTCCCSATALRRRLPVLAWVPDYSLQWLRLD) the chain is on the extracellular side. A helical membrane pass occupies residues 35 to 55 (FIAGLSVGLTVIPQALAYAEV). A topological domain (cytoplasmic) is located at residue Ala56. A helical transmembrane segment spans residues 57 to 77 (GLPPQYGLYSAFMGCFVYFFL). Residues 78 to 82 (GTSRD) are Extracellular-facing. Residues 83 to 100 (VTLGPTAIMSLLVSFYTF) traverse the membrane as a helical segment. The Cytoplasmic portion of the chain corresponds to 101–106 (REPAYA). Residues 107–127 (VLLAFLSGCIQLAMGLLHLGF) form a helical membrane-spanning segment. The Extracellular segment spans residues 128–176 (LLDFISCPVIKGFTSAASITIGFGQIKNLLGLQKIPRQFFLQVYHTFLH). A helical transmembrane segment spans residues 177–197 (IGETRVGDAVLGLASMLLLLV). Over 198 to 233 (LKCMREHMPPPHPEMPLAVKFSRGLVWTVTTARNAL) the chain is Cytoplasmic. Residues 234–254 (VVSSAALIAYAFEVTGSHPFV) traverse the membrane as a helical segment. Topologically, residues 255-287 (LTGKIAEGLPPVRIPPFSVTRDNKTISFSEMVQ) are extracellular. The chain crosses the membrane as a helical span at residues 288 to 308 (DMGAGLAVVPLMGLLESIAVA). The Cytoplasmic segment spans residues 309–324 (KSFASQNNYRIDANQE). The chain crosses the membrane as a helical span at residues 325–345 (LLAIGLTNVLGSLVSSYPVTG). Over 346–361 (SFGRTAVNAQTGVCTP) the chain is Extracellular. Residues 362-382 (AGGLVTGALVLLSLNYLTSLF) form a helical membrane-spanning segment. A topological domain (cytoplasmic) is located at residue Ser383. The chain crosses the membrane as a helical span at residues 384–404 (YIPKSALAAVIITAVTPLFDV). The Extracellular segment spans residues 405 to 417 (KIFRSLWRVQRLD). The chain crosses the membrane as a helical span at residues 418-438 (LLPLCVTFLLSFWEIQYGILA). Topologically, residues 439 to 593 (GSLVSLLILL…SSLLKSPSGP (155 aa)) are cytoplasmic. The region spanning 453-566 (RPKTQVSEGQ…EEAEKFLQQE (114 aa)) is the STAS domain. The interval 564–593 (QQEPGTEPNSIHEDAVPEQRSSLLKSPSGP) is disordered. Residues 582–593 (QRSSLLKSPSGP) are compositionally biased toward polar residues.

This sequence belongs to the SLC26A/SulP transporter (TC 2.A.53) family. Abundantly expressed in the cerebellum, with a predominant expression in Purkinje cells (at protein level). In terms of tissue distribution, predominantly expressed in the kidney and brain. In the kidney localizes in collecting duct intercalated cells (at protein level). As to expression, predominantly expressed in the brain with lower levels in the kidney.

Its subcellular location is the cell membrane. It is found in the lysosome membrane. The protein resides in the apical cell membrane. It localises to the basolateral cell membrane. The enzyme catalyses hydrogencarbonate(in) + chloride(out) = hydrogencarbonate(out) + chloride(in). It carries out the reaction sulfate(in) + H(+)(in) = sulfate(out) + H(+)(out). It catalyses the reaction oxalate(in) + chloride(out) = oxalate(out) + chloride(in). Its function is as follows. Sodium-independent anion exchanger mediating bicarbonate, chloride, sulfate and oxalate transport. Exhibits sodium-independent sulfate anion transporter activity that may cooperate with SLC26A2 to mediate DIDS-sensitive sulfate uptake into high endothelial venules endothelial cells (HEVEC). In the kidney, mediates chloride-bicarbonate exchange, facilitating V-ATPase-mediated acid secretion. May function as a chloride channel, playing an important role in moderating chloride homeostasis and neuronal activity in the cerebellum. The protein is Sodium-independent sulfate anion transporter of Mus musculus (Mouse).